Consider the following 350-residue polypeptide: Methionine import ATP-binding protein MetN (350 aa).

One can recognise an ABC transporter domain in the interval 2 to 242 (IELKGISQHF…PRHDVTRALI (241 aa)). Residue 39–46 (GRSGAGKS) participates in ATP binding.

Belongs to the ABC transporter superfamily. Methionine importer (TC 3.A.1.24) family. The complex is composed of two ATP-binding proteins (MetN), two transmembrane proteins (MetI) and a solute-binding protein (MetQ).

It localises to the cell inner membrane. It catalyses the reaction L-methionine(out) + ATP + H2O = L-methionine(in) + ADP + phosphate + H(+). It carries out the reaction D-methionine(out) + ATP + H2O = D-methionine(in) + ADP + phosphate + H(+). Its function is as follows. Part of the ABC transporter complex MetNIQ involved in methionine import. Responsible for energy coupling to the transport system. The polypeptide is Methionine import ATP-binding protein MetN (Ralstonia nicotianae (strain ATCC BAA-1114 / GMI1000) (Ralstonia solanacearum)).